The primary structure comprises 158 residues: Large ribosomal subunit protein mL50 (158 aa).

Belongs to the mitochondrion-specific ribosomal protein mL50 family. In terms of assembly, component of the mitochondrial ribosome large subunit (39S) which comprises a 16S rRNA and about 50 distinct proteins.

The protein resides in the mitochondrion. This Pongo abelii (Sumatran orangutan) protein is Large ribosomal subunit protein mL50 (MRPL50).